The sequence spans 130 residues: Mediator of RNA polymerase II transcription subunit 10 (130 aa).

The protein belongs to the Mediator complex subunit 10 family. As to quaternary structure, component of the Mediator complex.

The protein resides in the nucleus. Its function is as follows. Component of the Mediator complex, a coactivator involved in the regulated transcription of nearly all RNA polymerase II-dependent genes. Mediator functions as a bridge to convey information from gene-specific regulatory proteins to the basal RNA polymerase II transcription machinery. Mediator is recruited to promoters by direct interactions with regulatory proteins and serves as a scaffold for the assembly of a functional preinitiation complex with RNA polymerase II and the general transcription factors. The sequence is that of Mediator of RNA polymerase II transcription subunit 10 (MED10) from Anopheles gambiae (African malaria mosquito).